The sequence spans 340 residues: KRR1 small subunit processome component homolog (340 aa).

Residues 124 to 192 (DIIKIGNLVH…VRDIVLETMN (69 aa)) enclose the KH domain. Residues 228–244 (KNKNISKRKQPKSKKPK) show a composition bias toward basic residues. 2 disordered regions span residues 228–259 (KNKN…ESKI) and 271–324 (NQEQ…KVDV). Residues 269–302 (FLNQEQKQAKRNQERSAKQADAAKKQDERRNKDF) are a coiled coil. 2 stretches are compositionally biased toward basic and acidic residues: residues 275–301 (KQAK…RNKD) and 309–324 (APSR…KVDV).

This sequence belongs to the KRR1 family. As to quaternary structure, monomer. Component of the ribosomal small subunit (SSU) processome.

It is found in the nucleus. The protein resides in the nucleolus. In terms of biological role, required for 40S ribosome biogenesis. Involved in nucleolar processing of pre-18S ribosomal RNA and ribosome assembly. Binds to RNA. Required for female germline development, cell viability during eye development and for survival of dividing cells and epithelial cells during early wing disk development. The chain is KRR1 small subunit processome component homolog from Drosophila persimilis (Fruit fly).